A 264-amino-acid chain; its full sequence is uncharacterized protein (264 aa).

The tract at residues 1 to 20 (MENIEKKCQPETINEDNNDE) is disordered.

The protein belongs to the mimivirus R73/L269/L862 family.

This is an uncharacterized protein from Acanthamoeba polyphaga mimivirus (APMV).